Consider the following 321-residue polypeptide: Lipoyl synthase (321 aa).

[4Fe-4S] cluster-binding residues include Cys-68, Cys-73, Cys-79, Cys-94, Cys-98, Cys-101, and Ser-308. In terms of domain architecture, Radical SAM core spans 80 to 297 (FNHGTATFMI…KAEAMAMGFT (218 aa)).

The protein belongs to the radical SAM superfamily. Lipoyl synthase family. [4Fe-4S] cluster serves as cofactor.

It is found in the cytoplasm. It catalyses the reaction [[Fe-S] cluster scaffold protein carrying a second [4Fe-4S](2+) cluster] + N(6)-octanoyl-L-lysyl-[protein] + 2 oxidized [2Fe-2S]-[ferredoxin] + 2 S-adenosyl-L-methionine + 4 H(+) = [[Fe-S] cluster scaffold protein] + N(6)-[(R)-dihydrolipoyl]-L-lysyl-[protein] + 4 Fe(3+) + 2 hydrogen sulfide + 2 5'-deoxyadenosine + 2 L-methionine + 2 reduced [2Fe-2S]-[ferredoxin]. It functions in the pathway protein modification; protein lipoylation via endogenous pathway; protein N(6)-(lipoyl)lysine from octanoyl-[acyl-carrier-protein]: step 2/2. Catalyzes the radical-mediated insertion of two sulfur atoms into the C-6 and C-8 positions of the octanoyl moiety bound to the lipoyl domains of lipoate-dependent enzymes, thereby converting the octanoylated domains into lipoylated derivatives. This chain is Lipoyl synthase, found in Cronobacter sakazakii (strain ATCC BAA-894) (Enterobacter sakazakii).